The primary structure comprises 291 residues: Ribosomal RNA small subunit methyltransferase H (291 aa).

Residues 31–33 (GGH), Asp50, Phe77, Asp98, and Gln105 each bind S-adenosyl-L-methionine.

Belongs to the methyltransferase superfamily. RsmH family.

Its subcellular location is the cytoplasm. The enzyme catalyses cytidine(1402) in 16S rRNA + S-adenosyl-L-methionine = N(4)-methylcytidine(1402) in 16S rRNA + S-adenosyl-L-homocysteine + H(+). Functionally, specifically methylates the N4 position of cytidine in position 1402 (C1402) of 16S rRNA. The chain is Ribosomal RNA small subunit methyltransferase H from Endomicrobium trichonymphae.